Reading from the N-terminus, the 213-residue chain is Octanoyltransferase (213 aa).

The BPL/LPL catalytic domain maps to 32-207 (ENTPDEIWLV…NILALLNNPP (176 aa)). Residues 71–78 (RGGQVTYH), 138–140 (SLG), and 151–153 (GLA) each bind substrate. Cysteine 169 functions as the Acyl-thioester intermediate in the catalytic mechanism.

It belongs to the LipB family.

The protein resides in the cytoplasm. It catalyses the reaction octanoyl-[ACP] + L-lysyl-[protein] = N(6)-octanoyl-L-lysyl-[protein] + holo-[ACP] + H(+). It participates in protein modification; protein lipoylation via endogenous pathway; protein N(6)-(lipoyl)lysine from octanoyl-[acyl-carrier-protein]: step 1/2. Its function is as follows. Catalyzes the transfer of endogenously produced octanoic acid from octanoyl-acyl-carrier-protein onto the lipoyl domains of lipoate-dependent enzymes. Lipoyl-ACP can also act as a substrate although octanoyl-ACP is likely to be the physiological substrate. The polypeptide is Octanoyltransferase (Citrobacter koseri (strain ATCC BAA-895 / CDC 4225-83 / SGSC4696)).